A 515-amino-acid chain; its full sequence is tRNA pseudouridine synthase Pus10 (515 aa).

Residues cysteine 21 and cysteine 24 each contribute to the Zn(2+) site. Residues 42–85 (KEVTYELQKYLSHGDPAEENDTPPSKKAKIEEDTSSNEHLGNCE) are a coiled coil. The interval 55–82 (GDPAEENDTPPSKKAKIEEDTSSNEHLG) is disordered. The Zn(2+) site is built by cysteine 96 and cysteine 99. Residues 291 to 304 (TPWIIDGERKIESS) form an RNA binding forefinger loop region. The active-site Nucleophile is the aspartate 331. The segment at 428–443 (QKTPLRVLHRRPLASR) is RNA binding thumb loop.

It belongs to the pseudouridine synthase Pus10 family.

It is found in the nucleus. It localises to the cytoplasm. Its subcellular location is the mitochondrion. The catalysed reaction is uridine(55) in tRNA = pseudouridine(55) in tRNA. The enzyme catalyses uridine(54) in tRNA = pseudouridine(54) in tRNA. Functionally, protein with different functions depending on its subcellular location: involved in miRNA processing in the nucleus and acts as a tRNA pseudouridylate synthase in the cytoplasm. In the cytoplasm, acts as a pseudouridylate synthase by catalyzing synthesis of pseudouridine(54) and pseudouridine(55) from uracil-54 and uracil-55, respectively, in the psi GC loop of a subset of tRNAs. tRNA pseudouridylate synthase activity is enhanced by the presence of 1-methyladenosine at position 53-61 of tRNAs. Does not show tRNA pseudouridylate synthase activity in the nucleus. In the nucleus, promotes primary microRNAs (pri-miRNAs) processing independently of its RNA pseudouridylate synthase activity. Binds pri-miRNAs. The protein is tRNA pseudouridine synthase Pus10 of Xenopus laevis (African clawed frog).